The sequence spans 651 residues: A-type voltage-gated potassium channel KCND1 (651 aa).

Residues 1 to 183 (MAAGVATWLP…RAFENPHTST (183 aa)) lie on the Cytoplasmic side of the membrane. An interaction with KCNIP1, KCNIP2, and other family members region spans residues 2–20 (AAGVATWLPFARAAAVGWL). Residues His-104, Cys-131, and Cys-132 each contribute to the Zn(2+) site. The segment at 144-164 (AERLAEDEEAEQAGEGPALPA) is disordered. The helical transmembrane segment at 184–205 (AALVFYYVTGFFIAVSVIANVV) threads the bilayer. At 206–230 (ETIPCRGTPRWPSKEQSCGDRFPTA) the chain is on the extracellular side. The helical transmembrane segment at 231–252 (FFCMDTACVLIFTGEYLLRLFA) threads the bilayer. At 253 to 263 (APSRCRFLRSV) the chain is on the cytoplasmic side. A helical transmembrane segment spans residues 264–284 (MSLIDVVAILPYYIGLFVPKN). Residues 285 to 287 (DDV) lie on the Extracellular side of the membrane. The helical; Voltage-sensor transmembrane segment at 288–308 (SGAFVTLRVFRVFRIFKFSRH) threads the bilayer. Over 309–323 (SQGLRILGYTLKSCA) the chain is Cytoplasmic. Positions 310-323 (QGLRILGYTLKSCA) are S4-S5 linker. The chain crosses the membrane as a helical span at residues 324–345 (SELGFLLFSLTMAIIIFATVMF). The Extracellular portion of the chain corresponds to 346 to 359 (YAEKGTSKTNFTSI). N-linked (GlcNAc...) asparagine glycosylation is present at Asn-355. Positions 360–371 (PAAFWYTIVTMT) form an intramembrane region, helical. A Selectivity filter motif is present at residues 372–377 (TLGYGD). An intramembrane segment occupies 372–379 (TLGYGDMV). The Extracellular portion of the chain corresponds to 380–386 (PSTIAGK). A helical transmembrane segment spans residues 387–415 (IFGSICSLSGVLVIALPVPVIVSNFSRIY). The Cytoplasmic segment spans residues 416 to 651 (HQNQRADKRR…LPETVKISSL (236 aa)). Ser-458 is subject to Phosphoserine. The tract at residues 474 to 489 (FEQQHHHLLHCLEKTT) is required for dendritic targeting. Ser-555 carries the phosphoserine modification. Disordered regions lie at residues 566-585 (RRSPAPQTRSSLNAKPHDSL) and 601-651 (IPTP…ISSL). Over residues 626–637 (TPNTTLRNSSLG) the composition is skewed to polar residues.

It belongs to the potassium channel family. D (Shal) (TC 1.A.1.2) subfamily. Kv4.1/KCND1 sub-subfamily. Component of heteromultimeric potassium channels. Identified in potassium channel complexes containing KCND1, KCND2, KCND3, KCNIP1, KCNIP2, KCNIP3, KCNIP4, DPP6 and DPP10.

It is found in the cell membrane. It catalyses the reaction K(+)(in) = K(+)(out). Its function is as follows. A-type voltage-gated potassium channel that mediates transmembrane potassium transport in excitable membranes in the brain. Mediates A-type current I(SA) in suprachiasmatic nucleus (SCN) neurons. Exhibits a low-threshold A-type current with a hyperpolarized steady-state inactivation midpoint and the recovery process was steeply voltage-dependent, with recovery being markedly faster at more negative potentials. May regulates repetitive firing rates in the suprachiasmatic nucleus (SCN) neurons and circadian rhythms in neuronal excitability and behavior. Contributes to the regulation of the circadian rhythm of action potential firing in suprachiasmatic nucleus neurons, which regulates the circadian rhythm of locomotor activity. The regulatory subunit KCNIP1 modulates the kinetics of channel inactivation, increases the current amplitudes and accelerates recovery from inactivation, shifts activation in a depolarizing direction. The regulatory subunit DPP10 decreases the voltage sensitivity of the inactivation channel gating. The protein is A-type voltage-gated potassium channel KCND1 of Mus musculus (Mouse).